The following is a 252-amino-acid chain: MESWLTSLITQSLTFSILIVGIVSFLESLALVGLLLPGIVFMATLGTFIGNGKLPFYPSWIAGIIGCLLGDWCSYFIGLYFKNWLYSLKFLKKNCHLLDKTKSLLHKHSMITILVGRFIGPTRPLIPMVSGMLKLPLKKFILPSLLGCILWPPIYFFPGIITGITINIPPNPKNDYFKWLLLIIAILIWFGIWLTSKWWKIKKIKNKNNIHFIKRNIGWIALIILSSGIIGLILIQFHPTMIIVRKVFSTIL.

6 helical membrane-spanning segments follow: residues 5–25 (LTSL…IVSF), 29–49 (LALV…GTFI), 61–81 (IAGI…GLYF), 141–161 (ILPS…PGII), 179–199 (WLLL…SKWW), and 217–237 (IGWI…LIQF).

This sequence belongs to the DedA family.

Its subcellular location is the cell membrane. This is an uncharacterized protein from Buchnera aphidicola subsp. Schizaphis graminum (strain Sg).